The sequence spans 217 residues: Probable transaldolase (217 aa).

Catalysis depends on K83, which acts as the Schiff-base intermediate with substrate.

It belongs to the transaldolase family. Type 3B subfamily.

The protein resides in the cytoplasm. It catalyses the reaction D-sedoheptulose 7-phosphate + D-glyceraldehyde 3-phosphate = D-erythrose 4-phosphate + beta-D-fructose 6-phosphate. The protein operates within carbohydrate degradation; pentose phosphate pathway; D-glyceraldehyde 3-phosphate and beta-D-fructose 6-phosphate from D-ribose 5-phosphate and D-xylulose 5-phosphate (non-oxidative stage): step 2/3. Its function is as follows. Transaldolase is important for the balance of metabolites in the pentose-phosphate pathway. This Chelativorans sp. (strain BNC1) protein is Probable transaldolase.